Consider the following 388-residue polypeptide: Succinate--CoA ligase [ADP-forming] subunit beta (388 aa).

One can recognise an ATP-grasp domain in the interval 9 to 244 (KQLFAEYGLP…PSQDDAREAH (236 aa)). ATP contacts are provided by residues K46, 53–55 (GRG), E99, T102, and E107. Mg(2+)-binding residues include N199 and D213. Residues N264 and 321-323 (GIV) contribute to the substrate site.

This sequence belongs to the succinate/malate CoA ligase beta subunit family. Heterotetramer of two alpha and two beta subunits. Mg(2+) serves as cofactor.

The catalysed reaction is succinate + ATP + CoA = succinyl-CoA + ADP + phosphate. The enzyme catalyses GTP + succinate + CoA = succinyl-CoA + GDP + phosphate. The protein operates within carbohydrate metabolism; tricarboxylic acid cycle; succinate from succinyl-CoA (ligase route): step 1/1. Its function is as follows. Succinyl-CoA synthetase functions in the citric acid cycle (TCA), coupling the hydrolysis of succinyl-CoA to the synthesis of either ATP or GTP and thus represents the only step of substrate-level phosphorylation in the TCA. The beta subunit provides nucleotide specificity of the enzyme and binds the substrate succinate, while the binding sites for coenzyme A and phosphate are found in the alpha subunit. This chain is Succinate--CoA ligase [ADP-forming] subunit beta, found in Pseudomonas paraeruginosa (strain DSM 24068 / PA7) (Pseudomonas aeruginosa (strain PA7)).